The sequence spans 396 residues: 1-deoxy-D-xylulose 5-phosphate reductoisomerase (396 aa).

NADPH contacts are provided by T13, G14, S15, I16, and N127. K128 provides a ligand contact to 1-deoxy-D-xylulose 5-phosphate. Position 129 (E129) interacts with NADPH. D153 lines the Mn(2+) pocket. S154, E155, S184, and H207 together coordinate 1-deoxy-D-xylulose 5-phosphate. Mn(2+) is bound at residue E155. G213 contributes to the NADPH binding site. 4 residues coordinate 1-deoxy-D-xylulose 5-phosphate: S220, N225, K226, and E229. E229 is a Mn(2+) binding site.

Belongs to the DXR family. Requires Mg(2+) as cofactor. Mn(2+) is required as a cofactor.

The catalysed reaction is 2-C-methyl-D-erythritol 4-phosphate + NADP(+) = 1-deoxy-D-xylulose 5-phosphate + NADPH + H(+). It functions in the pathway isoprenoid biosynthesis; isopentenyl diphosphate biosynthesis via DXP pathway; isopentenyl diphosphate from 1-deoxy-D-xylulose 5-phosphate: step 1/6. Its function is as follows. Catalyzes the NADPH-dependent rearrangement and reduction of 1-deoxy-D-xylulose-5-phosphate (DXP) to 2-C-methyl-D-erythritol 4-phosphate (MEP). This is 1-deoxy-D-xylulose 5-phosphate reductoisomerase from Pseudomonas syringae pv. tomato (strain ATCC BAA-871 / DC3000).